The following is a 933-amino-acid chain: MKHIFKKLHRGGNQEQQNRTNDAAPPSDQNRIHVSANPPQATPSSVTETLPVAGATSSMASPAPTAASNRADYMSSEEEYQVQLALAISASNSQSSEDPEKHQIRAATLLSLGSHQRMDSRRDSSEVVAQRLSRQYWEYGVLDYEEKVVDSFYDVYSLSTDSAKQGEMPSLEDLESNHGTPGFEAVVVNRPIDSSLHELLEIAECIALGCSTTSVSVLVQRLAELVTEHMGGSAEDSSIVLARWTEKSSEFKAALNTCVFPIGFVKIGISRHRALLFKVLADSVRLPCRLVKGSHYTGNEDDAVNTIRLEDEREYLVDLMTDPGTLIPADFASASNNTVEPCNSNGNKFPTAQFSNDVPKLSEGEGSSHSSMANYSSSLDRRTEAERTDSSYPKVGPLRNIDYSSPSSVTSSTQLENNSSTAIGKGSRGAIIECSRTNMNIVPYNQNSEEDPKNLFADLNPFQNKGADKLYMPTKSGLNNVDDFHQQKNNPLVGRSPAPMMWKNYSCNEAPKRKENSYIENLLPKLHRDPRYGNTQSSYATSSSNGAISSNVHGRDNVTFVSPVAVPSSFTSTENQFRPSIVEDMNRNTNNELDLQPHTAAVVHGQQNDESHIHDHRKYTSDDISTGCDPRLKDHESTSSSLDSTSYRNDPQVLDDADVGECEIPWNDLVIAERIGLGSYGEVYHADWHGTEVAVKKFLDQDFSGAALAEFRSEVRIMRRLRHPNVVFFLGAVTRPPNLSIVTEFLPRGSLYRILHRPKSHIDERRRIKMALDVAMGMNCLHTSTPTIVHRDLKTPNLLVDNNWNVKVGDFGLSRLKHNTFLSSKSTAGTPEWMAPEVLRNEPSNEKCDVYSFGVILWELATLRLPWRGMNPMQVVGAVGFQNRRLEIPKELDPVVGRIILECWQTDPNLRPSFAQLTEVLKPLNRLVLPTPQ.

Basic residues predominate over residues 1 to 10; that stretch reads MKHIFKKLHR. Disordered stretches follow at residues 1–74, 342–424, 527–550, and 604–650; these read MKHI…ADYM, CNSN…TAIG, HRDP…AISS, and HGQQ…YRND. Residues 37–48 show a composition bias toward polar residues; it reads NPPQATPSSVTE. The span at 53–68 shows a compositional bias: low complexity; it reads AGATSSMASPAPTAAS. Residues 342–356 are compositionally biased toward polar residues; that stretch reads CNSNGNKFPTAQFSN. Residues 367–378 are compositionally biased toward low complexity; the sequence is SSHSSMANYSSS. The segment covering 379-389 has biased composition (basic and acidic residues); sequence LDRRTEAERTD. The segment covering 404–413 has biased composition (low complexity); that stretch reads SSPSSVTSST. Residues 533-550 show a composition bias toward polar residues; it reads GNTQSSYATSSSNGAISS. Over residues 607-621 the composition is skewed to basic and acidic residues; sequence QNDESHIHDHRKYTS. In terms of domain architecture, Protein kinase spans 669–925; it reads LVIAERIGLG…QLTEVLKPLN (257 aa). Residues 675–683 and K696 contribute to the ATP site; that span reads IGLGSYGEV. The Proton acceptor role is filled by D792.

The protein belongs to the protein kinase superfamily. TKL Ser/Thr protein kinase family. RAF subfamily. As to quaternary structure, interacts with KEG. Binds and recruited by EDR4 at the powdery mildew (e.g. G.cichoracearum) penetration site on the plasma membrane. Autophosphorylated.

The protein localises to the cell membrane. Its subcellular location is the endosome. The protein resides in the nucleus. It localises to the endoplasmic reticulum. It is found in the golgi apparatus. The protein localises to the trans-Golgi network. Its subcellular location is the early endosome. The enzyme catalyses L-seryl-[protein] + ATP = O-phospho-L-seryl-[protein] + ADP + H(+). The catalysed reaction is L-threonyl-[protein] + ATP = O-phospho-L-threonyl-[protein] + ADP + H(+). MAPKKK serine/threonine-protein kinase involved in the regulation of a MAP kinase cascade (probably including MPK3 and MPK6) that negatively regulates salicylic acid- (SA-) dependent defense responses, abscisic acid (ABA) signaling, and ethylene-induced senescence. Also modulates stress response (e.g. drought) signaling and cell death, in an ORE9-dependent manner. Functions at a point of cross talk between ethylene, ABA and SA signaling that impinges on senescence and cell death. On the other hand, it confers sensitivity to various pathogens such as the fungus E.cichoracearum, the oomycete H.parasitica and the bacteria P.syringae pv. tomato DC3000. Required for resistance to some hemibiotrophic/necrotrophic fungal pathogens (e.g. C.gloeosporioides, C.higginsianum and A.brassicicola) through the induction of defensin expression, probably by repressing MYC2, an inhibitor of defensin genes (PDFs). Together with KEG, may regulate endocytic trafficking and/or the formation of signaling complexes on trans-Golgi network (TGN)/ early endosome (EE) vesicles during stress responses. This is Serine/threonine-protein kinase EDR1 (EDR1) from Arabidopsis thaliana (Mouse-ear cress).